A 914-amino-acid chain; its full sequence is MVGLEDDTERERSPVVENGFSNGSRSSSSSAGVLSPSRKVTQGNDTLSYANILRARNKFADALALYEAMLEKDSKNVEAHIGKGICLQTQNKGNLAFDCFSEAIRLDPHNACALTHCGILHKEEGRLVEAAESYQKALMADASYKPAAECLAIVLTDLGTSLKLAGNTQEGIQKYYEALKIDPHYAPAYYNLGVVYSEMMQYDNALSCYEKAALERPMYAEAYCNMGVIYKNRGDLEMAITCYERCLAVSPNFEIAKNNMAIALTDLGTKVKLEGDVTQGVAYYKKALYYNWHYADAMYNLGVAYGEMLKFDMAIVFYELAFHFNPHCAEACNNLGVLYKDRDNLDKAVECYQMALSIKPNFAQSLNNLGVVYTVQGKMDAAASMIEKAILANPTYAEAFNNLGVLYRDAGNITMAIDAYEECLKIDPDSRNAGQNRLLAMNYINEGLDDKLFEAHRDWGWRFTRLHPQYTSWDNLKDPERPITIGYISPDFFTHSVSYFIEAPLTHHDYTKYKVVVYSAVVKADAKTYRFRDKVLKKGGVWKDIYGIDEKKIASMVREDKIDILVELTGHTANNKLGTMACRPAPVQVTWIGYPNTTGLPTVDYRITDSLADPPDTKQKQVEELVRLPDCFLCYTPSPEAGPVCPTPALSNGFVTFGSFNNLAKITPKVLQVWARILCAVPNSRLVVKCKPFCCDSIRQRFLTTLEQLGLESKRVDLLPLILFNHDHMQAYSLMDISLDTFPYAGTTTTCESLYMGVPCVTMAGSVHAHNVGVSLLTKVGLGHLVAKNEDEYVQLSVDLASDVTALSKLRMSLRDLMAGSPVCNGPSFAVGLESAYRNMWKKYCKGEVPSLRRMEMLQKEVHDDPLISKDLGPSRVSVTGEATPSLKANGSAPVPSSLPTQSPQLSKRMDSTS.

Residues 1-39 (MVGLEDDTERERSPVVENGFSNGSRSSSSSAGVLSPSRK) form a disordered region. Positions 19 to 37 (GFSNGSRSSSSSAGVLSPS) are enriched in low complexity. The residue at position 35 (Ser-35) is a Phosphoserine. 11 TPR repeats span residues 43-76 (GNDT…DSKN), 77-110 (VEAH…DPHN), 112-144 (CALT…DASY), 152-185 (AIVL…DPHY), 186-219 (APAY…RPMY), 220-253 (AEAY…SPNF), 261-294 (AIAL…NWHY), 295-328 (ADAM…NPHC), 329-362 (AEAC…KPNF), 364-396 (QSLN…NPTY), and 397-430 (AEAF…DPDS). The tract at residues 431 to 914 (RNAGQNRLLA…QLSKRMDSTS (484 aa)) is catalytic region. The segment at 866 to 914 (PLISKDLGPSRVSVTGEATPSLKANGSAPVPSSLPTQSPQLSKRMDSTS) is disordered. The span at 877 to 889 (VSVTGEATPSLKA) shows a compositional bias: polar residues. Residues 894 to 907 (PVPSSLPTQSPQLS) are compositionally biased toward low complexity.

This sequence belongs to the glycosyltransferase 41 family. O-GlcNAc transferase subfamily. Homomultimer; via its TPR repeats. Interacts with GI. Interacts with TCP14 and TCP15. Interacts (via N-terminus) with APRR5. Interacts with CPN20. Widely expressed. Present throughout the plant (at protein level).

The protein localises to the cytoplasm. Its subcellular location is the nucleus. It carries out the reaction L-seryl-[protein] + UDP-N-acetyl-alpha-D-glucosamine = 3-O-(N-acetyl-beta-D-glucosaminyl)-L-seryl-[protein] + UDP + H(+). It catalyses the reaction L-threonyl-[protein] + UDP-N-acetyl-alpha-D-glucosamine = 3-O-(N-acetyl-beta-D-glucosaminyl)-L-threonyl-[protein] + UDP + H(+). The catalysed reaction is L-seryl-[protein] + GDP-beta-L-fucose = 3-O-(alpha-L-fucosyl)-L-seryl-[protein] + GDP + H(+). The enzyme catalyses L-threonyl-[protein] + GDP-beta-L-fucose = 3-O-(alpha-L-fucosyl)-L-threonyl-[protein] + GDP + H(+). The protein operates within protein modification; protein glycosylation. Its function is as follows. Probable O-linked N-acetylglucosamine transferase (OGT) involved in various processes such as gibberellin (GA) signaling pathway and circadian clock. OGTs catalyze the addition of nucleotide-activated sugars directly onto the polypeptide through O-glycosidic linkage with the hydroxyl of serine or threonine. Probably acts by adding O-linked sugars to yet unknown proteins. Acts as a repressor of GA signaling pathway to inhibit hypocotyl elongation. Functions with GIGANTEA (GI) in pathways controlling flowering, circadian cotyledon movements and hypocotyl elongation. Acts as a light-regulated promoter of elongation via its interaction with GI. Acts as an activator of cytokinin signaling. Required with SEC for gamete and seed development. Its OGT activity has been proved in vitro but not in vivo. Possesses O-fucosyltransferase activity on specific serine and threonine residues. Mediates O-fucosylation of the DELLA protein RGA, a repressor of the GA signaling pathway. O-fucosylation enhances RGA activity by promoting RGA binding to key transcription factors in brassinosteroid and light-signaling pathways. Regulates root hair patterning upstream of the transcription factor WER, independently of DELLA proteins and GA signaling. Involved in abscisic acid (ABA) signaling partly through functional ABAR. Mediates O-fucosylation of CPN20 that may depress ABA responses during seed germination and seedling development. Involved in the modulation of the pace of the circadian clock by mediating O-fucosylation of APRR5, one of the core circadian clock components. O-fucosylation promotes APRR5 proteolysis. The polypeptide is Probable UDP-N-acetylglucosamine--peptide N-acetylglucosaminyltransferase SPINDLY (Arabidopsis thaliana (Mouse-ear cress)).